The following is a 185-amino-acid chain: Threonylcarbamoyl-AMP synthase (185 aa).

One can recognise a YrdC-like domain in the interval 4–185 (SFRVQQAARE…LATGEVVRPG (182 aa)).

This sequence belongs to the SUA5 family. TsaC subfamily.

The protein localises to the cytoplasm. It carries out the reaction L-threonine + hydrogencarbonate + ATP = L-threonylcarbamoyladenylate + diphosphate + H2O. Functionally, required for the formation of a threonylcarbamoyl group on adenosine at position 37 (t(6)A37) in tRNAs that read codons beginning with adenine. Catalyzes the conversion of L-threonine, HCO(3)(-)/CO(2) and ATP to give threonylcarbamoyl-AMP (TC-AMP) as the acyladenylate intermediate, with the release of diphosphate. The protein is Threonylcarbamoyl-AMP synthase of Pseudomonas putida (strain GB-1).